Here is a 357-residue protein sequence, read N- to C-terminus: Red-sensitive opsin (357 aa).

At 1–49 (MGDQWGDAVFAARRRGDDTTREAAFTYTNSNNTKDPFEGPNYHIAPRWV) the chain is on the extracellular side. The N-linked (GlcNAc...) asparagine glycan is linked to Asn-31. A helical transmembrane segment spans residues 50 to 74 (YNLATCWMFFVVVASTVTNGLVLVA). Residues 75–86 (SAKFKKLRHPLN) are Cytoplasmic-facing. The chain crosses the membrane as a helical span at residues 87–112 (WILVNLAIADLLETLLASTISVCNQF). The Extracellular portion of the chain corresponds to 113–126 (FGYFILGHPMCVFE). The cysteines at positions 123 and 200 are disulfide-linked. Residues 127–146 (GFTVATCGIAGLWSLTVISW) form a helical membrane-spanning segment. The Cytoplasmic segment spans residues 147 to 165 (ERWVVVCKPFGNVKFDGKM). Residues 166 to 189 (ATAGIVFTWVWSAVWCAPPIFGWS) form a helical membrane-spanning segment. The Extracellular portion of the chain corresponds to 190–215 (RYWPHGLKTSCGPDVFSGSEDPGVQS). The helical transmembrane segment at 216-243 (YMIVLMITCCFIPLGIIILCYIAVWWAI) threads the bilayer. Residues 244 to 265 (RTVAQQQKDSESTQKAEKEVSR) lie on the Cytoplasmic side of the membrane. The chain crosses the membrane as a helical span at residues 266 to 289 (MVVVMIMAYCFCWGPYTFFACFAA). Topologically, residues 290–297 (ANPGYAFH) are extracellular. A helical membrane pass occupies residues 298 to 322 (PLAAAMPAYFAKSATIYNPVIYVFM). Lys-309 carries the post-translational modification N6-(retinylidene)lysine. Over 323 to 357 (NRQFRVCIMQLFGKKVDDGSEVSTSKTEVSSVAPA) the chain is Cytoplasmic.

Belongs to the G-protein coupled receptor 1 family. Opsin subfamily. Post-translationally, phosphorylated on some or all of the serine and threonine residues present in the C-terminal region. In terms of tissue distribution, the color pigments are found in the cone photoreceptor cells.

It is found in the membrane. Its function is as follows. Visual pigments are the light-absorbing molecules that mediate vision. They consist of an apoprotein, opsin, covalently linked to cis-retinal. In Psalidodon fasciatus (Banded astyanax), this protein is Red-sensitive opsin (R007).